Reading from the N-terminus, the 199-residue chain is Elongation factor Ts (199 aa).

Positions 80–83 (TDFV) are involved in Mg(2+) ion dislocation from EF-Tu.

The protein belongs to the EF-Ts family.

The protein localises to the cytoplasm. Associates with the EF-Tu.GDP complex and induces the exchange of GDP to GTP. It remains bound to the aminoacyl-tRNA.EF-Tu.GTP complex up to the GTP hydrolysis stage on the ribosome. This chain is Elongation factor Ts, found in Thermodesulfovibrio yellowstonii (strain ATCC 51303 / DSM 11347 / YP87).